We begin with the raw amino-acid sequence, 478 residues long: V-type proton ATPase subunit H (478 aa).

It belongs to the V-ATPase H subunit family. V-ATPase is a heteromultimeric enzyme composed of a peripheral catalytic V1 complex (components A to H) attached to an integral membrane V0 proton pore complex (components: a, c, c', c'', d, e, f and VOA1). Interacts with YND1.

The protein resides in the vacuole membrane. Its function is as follows. Subunit of the V1 complex of vacuolar(H+)-ATPase (V-ATPase), a multisubunit enzyme composed of a peripheral complex (V1) that hydrolyzes ATP and a membrane integral complex (V0) that translocates protons. V-ATPase is responsible for acidifying and maintaining the pH of intracellular compartments. This subunit is essential for activity, but not assembly, of the enzyme complex. This subunit is also required for silencing the ATPase activity of V-ATPase when V1 is detached from V0. This chain is V-type proton ATPase subunit H, found in Saccharomyces cerevisiae (strain ATCC 204508 / S288c) (Baker's yeast).